The sequence spans 597 residues: Medium/long-chain-fatty-acid--CoA ligase FadD6 (597 aa).

This sequence belongs to the ATP-dependent AMP-binding enzyme family.

The enzyme catalyses a medium-chain fatty acid + ATP + CoA = a medium-chain fatty acyl-CoA + AMP + diphosphate. It carries out the reaction a long-chain fatty acid + ATP + CoA = a long-chain fatty acyl-CoA + AMP + diphosphate. It catalyses the reaction hexanoate + ATP + CoA = hexanoyl-CoA + AMP + diphosphate. The catalysed reaction is octanoate + ATP + CoA = octanoyl-CoA + AMP + diphosphate. The enzyme catalyses decanoate + ATP + CoA = decanoyl-CoA + AMP + diphosphate. It carries out the reaction dodecanoate + ATP + CoA = dodecanoyl-CoA + AMP + diphosphate. It catalyses the reaction tetradecanoate + ATP + CoA = tetradecanoyl-CoA + AMP + diphosphate. The catalysed reaction is hexadecanoate + ATP + CoA = hexadecanoyl-CoA + AMP + diphosphate. The enzyme catalyses octadecanoate + ATP + CoA = octadecanoyl-CoA + AMP + diphosphate. It carries out the reaction 9-decenoate + ATP + CoA = 9-decenoyl-CoA + AMP + diphosphate. It catalyses the reaction (9Z)-octadecenoate + ATP + CoA = (9Z)-octadecenoyl-CoA + AMP + diphosphate. The catalysed reaction is 2-hydroxyhexadecanoate + ATP + CoA = 2-hydroxyhexadecanoyl-CoA + AMP + diphosphate. The enzyme catalyses 3-hydroxytetradecanoate + ATP + CoA = 3-hydroxytetradecanoyl-CoA + AMP + diphosphate. It carries out the reaction 12-hydroxyoctadecanoate + ATP + CoA = 12-hydroxyoctadecanoyl-CoA + AMP + diphosphate. It catalyses the reaction 15-hydroxypentadecanoate + ATP + CoA = 15-hydroxypentadecanoyl-CoA + AMP + diphosphate. The catalysed reaction is 16-hydroxyhexadecanoate + ATP + CoA = 16-hydroxyhexadecanoyl-CoA + AMP + diphosphate. The enzyme catalyses 2-methylhexadecanoate + ATP + CoA = 2-methylhexadecanoyl-CoA + AMP + diphosphate. It carries out the reaction 3-methylundecanoate + ATP + CoA = 3-methylundecanoyl-CoA + AMP + diphosphate. It catalyses the reaction 12-methyltridecanoate + ATP + CoA = 12-methyltridecanoyl-CoA + AMP + diphosphate. The catalysed reaction is 12-methyloctadecanoate + ATP + CoA = 12-methyloctadecanoyl-CoA + AMP + diphosphate. Functionally, catalyzes the activation of medium/long-chain fatty acids as acyl-coenzyme A (acyl-CoA). May play a role in the uptake of fatty acids by trapping them metabolically as CoA esters. May also play an important role in the channeling of fatty acids into triacylglycerol (TAG) for use by Mycobacterium during its dormancy. This Mycobacterium tuberculosis (strain ATCC 25618 / H37Rv) protein is Medium/long-chain-fatty-acid--CoA ligase FadD6.